A 380-amino-acid chain; its full sequence is Hydrogenase maturation factor HypD2 (380 aa).

Fe cation contacts are provided by Cys-36, Cys-64, and Cys-67.

It belongs to the HypD family. [4Fe-4S] cluster serves as cofactor.

It participates in protein modification; [NiFe] hydrogenase maturation. In terms of biological role, involved in the maturation of [NiFe] hydrogenases. Involved in the biosynthesis of the Fe(CN)(2)CO cofactor. This chain is Hydrogenase maturation factor HypD2 (hypD2), found in Bradyrhizobium diazoefficiens (strain JCM 10833 / BCRC 13528 / IAM 13628 / NBRC 14792 / USDA 110).